Consider the following 246-residue polypeptide: Purine nucleoside phosphorylase Cgl2154/cg2365 (246 aa).

Zn(2+) is bound by residues H68, C107, and H124.

It belongs to the purine nucleoside phosphorylase YfiH/LACC1 family. In terms of assembly, homodimer. It depends on Cu(2+) as a cofactor. Zn(2+) is required as a cofactor.

The catalysed reaction is adenosine + phosphate = alpha-D-ribose 1-phosphate + adenine. The enzyme catalyses S-methyl-5'-thioadenosine + phosphate = 5-(methylsulfanyl)-alpha-D-ribose 1-phosphate + adenine. It carries out the reaction inosine + phosphate = alpha-D-ribose 1-phosphate + hypoxanthine. It catalyses the reaction adenosine + H2O + H(+) = inosine + NH4(+). Purine nucleoside enzyme that catalyzes the phosphorolysis of adenosine and inosine nucleosides, yielding D-ribose 1-phosphate and the respective free bases, adenine and hypoxanthine. Also catalyzes the phosphorolysis of S-methyl-5'-thioadenosine into adenine and S-methyl-5-thio-alpha-D-ribose 1-phosphate. Also has adenosine deaminase activity. The sequence is that of Purine nucleoside phosphorylase Cgl2154/cg2365 from Corynebacterium glutamicum (strain ATCC 13032 / DSM 20300 / JCM 1318 / BCRC 11384 / CCUG 27702 / LMG 3730 / NBRC 12168 / NCIMB 10025 / NRRL B-2784 / 534).